The primary structure comprises 265 residues: Dehydrogenase RED2 (265 aa).

Residues 6–26 (SFLLSKLFLCIALCTAYVAFS) form a helical membrane-spanning segment. N45 is a glycosylation site (N-linked (GlcNAc...) asparagine). A helical transmembrane segment spans residues 47–67 (TSTVFGLTIVAIGLSALSSWL). N74 is a glycosylation site (N-linked (GlcNAc...) asparagine). V89 lines the NADP(+) pocket. An N-linked (GlcNAc...) asparagine glycan is attached at N127. D136 and N163 together coordinate NADP(+). N176 carries an N-linked (GlcNAc...) asparagine glycan. S216 serves as the catalytic Proton donor. NADP(+)-binding residues include Y228 and K232. Y228 functions as the Proton acceptor in the catalytic mechanism. The active-site Lowers pKa of active site Tyr is K232.

This sequence belongs to the short-chain dehydrogenases/reductases (SDR) family.

It localises to the membrane. It catalyses the reaction a primary alcohol + NAD(+) = an aldehyde + NADH + H(+). The enzyme catalyses a secondary alcohol + NAD(+) = a ketone + NADH + H(+). It participates in mycotoxin biosynthesis. Dehydrogenase; part of the Tox1B locus, one of the 2 loci that mediate the biosynthesis of T-toxin, a family of linear polyketides 37 to 45 carbons in length, of which the major component is 41 carbons, and which leads to high virulence to maize. One of the PKSs (PKS1 or PKS2) could synthesize a precursor, used subsequently by the other PKS as starter unit, to add additional carbons. Variability in the length of the final carbon backbone C35-47 could be achieved by varying the number of condensation cycles, or use of different starter or extender units or might be due to decarboxylation of the penultimate product, catalyzed by DEC1. Additional proteins are required for the biosynthesis of T-toxin, including oxidoreductases RED1, RED2, RED3, LAM1 and OXI1, as well as esterase TOX9. In Cochliobolus heterostrophus (strain C4 / ATCC 48331 / race T) (Southern corn leaf blight fungus), this protein is Dehydrogenase RED2.